The chain runs to 380 residues: Protein neprosin (380 aa).

Positions 1–24 (MQAKFFTFVILSSVFYFNYPLAEA) are cleaved as a signal peptide. The propeptide at 25-128 (RSIQARLANK…QFPNLKFAPP (104 aa)) is activation peptide. Residues Cys52 and Cys98 are joined by a disulfide bond. Residues Asn68, Asn145, and Asn152 are each glycosylated (N-linked (GlcNAc...) asparagine). In terms of domain architecture, Neprosin PEP catalytic spans 129 to 380 (SANTNHQYAV…YLFYGGPGCQ (252 aa)). Residue Glu188 is part of the active site. A disulfide bridge links Cys219 with Cys224. N-linked (GlcNAc...) asparagine glycosylation is present at Asn253. Glu297 is an active-site residue. Cys358 and Cys379 are disulfide-bonded.

The protein belongs to the peptidase G3 family.

The protein localises to the secreted. It catalyses the reaction Hydrolysis of Pro-|-Xaa &gt;&gt; Ala-|-Xaa in oligopeptides.. Its activity is regulated as follows. Weakly inhibited by the aspartic protease inhibitor pepstatin. Weakly inhibited by pepstatin A (IC(50) of 140 uM) and 1,2-epoxy-3-(p-nitrophenoxy)propane (EPNP) (IC(50) of 480 uM). Activity is not affected by the POP inhibitor Z-Pro-prolinal inhibitor or the denaturant urea. Functionally, glutamic endopeptidase that preferentially cleaves peptide bonds on the C-terminal side of proline residues. Also cleaves peptide bonds on the C-terminal side of alanine residues but with less efficiency. In contrast to most proline-cleaving enzymes, effectively degrades proteins of any size. Found in the viscoelastic fluid of the pitcher, and so likely functions in the digestion of their prey. In Nepenthes x ventrata (Red tropical pitcher plant), this protein is Protein neprosin.